Reading from the N-terminus, the 542-residue chain is Trans-alpha-bergamotene synthase (542 aa).

The Mg(2+) site is built by Asp295, Asp299, Asp439, Thr443, and Glu447. Residues 295 to 299 (DDFYD) carry the DDXXD motif motif.

The protein belongs to the terpene synthase family. Requires Mg(2+) as cofactor.

It carries out the reaction (2E,6E)-farnesyl diphosphate = (1S,5S,6R)-alpha-bergamotene + diphosphate. It functions in the pathway secondary metabolite biosynthesis; terpenoid biosynthesis. Functionally, sesquiterpene synthase converting farnesyl diphosphate to trans-alpha-bergamotene as the major product. This is Trans-alpha-bergamotene synthase from Phyla dulcis (Aztec sweet herb).